We begin with the raw amino-acid sequence, 352 residues long: CRISPR-associated endonuclease Cas1 1 (352 aa).

Residues E207, H274, and E289 each coordinate Mn(2+).

It belongs to the CRISPR-associated endonuclease Cas1 family. In terms of assembly, homodimer, forms a heterotetramer with a Cas2 homodimer. Mg(2+) serves as cofactor. It depends on Mn(2+) as a cofactor.

Its function is as follows. CRISPR (clustered regularly interspaced short palindromic repeat), is an adaptive immune system that provides protection against mobile genetic elements (viruses, transposable elements and conjugative plasmids). CRISPR clusters contain spacers, sequences complementary to antecedent mobile elements, and target invading nucleic acids. CRISPR clusters are transcribed and processed into CRISPR RNA (crRNA). Acts as a dsDNA endonuclease. Involved in the integration of spacer DNA into the CRISPR cassette. This is CRISPR-associated endonuclease Cas1 1 from Saccharolobus solfataricus (strain ATCC 35092 / DSM 1617 / JCM 11322 / P2) (Sulfolobus solfataricus).